The primary structure comprises 161 residues: RNA pyrophosphohydrolase (161 aa).

In terms of domain architecture, Nudix hydrolase spans 9–155; the sequence is PYRPCVGVML…KRRVYRQVVD (147 aa). The Nudix box motif lies at 44–65; sequence GGIDDGEELHPAALRELSEETG.

Belongs to the Nudix hydrolase family. RppH subfamily. A divalent metal cation serves as cofactor.

Functionally, accelerates the degradation of transcripts by removing pyrophosphate from the 5'-end of triphosphorylated RNA, leading to a more labile monophosphorylated state that can stimulate subsequent ribonuclease cleavage. This is RNA pyrophosphohydrolase from Novosphingobium aromaticivorans (strain ATCC 700278 / DSM 12444 / CCUG 56034 / CIP 105152 / NBRC 16084 / F199).